The sequence spans 632 residues: Cytosolic Fe-S cluster assembly factor NAR1 (632 aa).

C20 contributes to the [4Fe-4S] cluster binding site. The segment at 27–53 (LPAKPEDSSNPYEVTTEDKAAASQPPP) is disordered. The [4Fe-4S] cluster site is built by C62, C65, and C68. Disordered stretches follow at residues 99–119 (WQTQ…NGHS) and 210–231 (LSPE…DTTP). Low complexity predominate over residues 101-119 (TQNGTNGTNGTNGTTNGHS). Polar residues predominate over residues 211–221 (SPETSNPSTKP). [4Fe-4S] cluster-binding residues include C240, C295, C486, and C490. Residues 542–573 (GSDSEEEKVDQDGDQNMQDATTNGHTSEPDIV) are disordered. Over residues 544–554 (DSEEEKVDQDG) the composition is skewed to acidic residues. Polar residues predominate over residues 555–567 (DQNMQDATTNGHT).

This sequence belongs to the NARF family.

Component of the cytosolic Fe/S protein assembly machinery. Required for maturation of extramitochondrial Fe/S proteins. May play a role in the transfer of pre-assembled Fe/S clusters to target apoproteins. This chain is Cytosolic Fe-S cluster assembly factor NAR1 (NAR1), found in Phaeosphaeria nodorum (strain SN15 / ATCC MYA-4574 / FGSC 10173) (Glume blotch fungus).